The following is a 218-amino-acid chain: Thiopurine S-methyltransferase (218 aa).

S-adenosyl-L-methionine is bound by residues Trp-10, Leu-45, Glu-66, and Arg-123.

It belongs to the class I-like SAM-binding methyltransferase superfamily. TPMT family.

It localises to the cytoplasm. It carries out the reaction S-adenosyl-L-methionine + a thiopurine = S-adenosyl-L-homocysteine + a thiopurine S-methylether.. This chain is Thiopurine S-methyltransferase, found in Shewanella sp. (strain MR-7).